The chain runs to 205 residues: Interleukin-6 (205 aa).

The N-terminal stretch at 1–21 (RFTSAFSLGLLLVTATAFPTP) is a signal peptide. A disulfide bond links Cys-64 and Cys-70. Ser-73 is modified (phosphoserine). Cysteines 93 and 103 form a disulfide. Asn-164 is a glycosylation site (N-linked (GlcNAc...) asparagine).

It belongs to the IL-6 superfamily. Component of a hexamer of two molecules each of IL6, IL6R and IL6ST; first binds to IL6R to associate with the signaling subunit IL6ST. Interacts with IL6R (via the N-terminal ectodomain); this interaction may be affected by IL6R-binding with SORL1, hence decreasing IL6 cis signaling. Interacts with SORL1 (via the N-terminal ectodomain); this interaction leads to IL6 internalization and lysosomal degradation. May form a trimeric complex with the soluble SORL1 ectodomain and soluble IL6R receptor; this interaction might stabilize circulating IL6, hence promoting IL6 trans signaling.

Its subcellular location is the secreted. Functionally, cytokine with a wide variety of biological functions in immunity, tissue regeneration, and metabolism. Binds to IL6R, then the complex associates to the signaling subunit IL6ST/gp130 to trigger the intracellular IL6-signaling pathway. The interaction with the membrane-bound IL6R and IL6ST stimulates 'classic signaling', whereas the binding of IL6 and soluble IL6R to IL6ST stimulates 'trans-signaling'. Alternatively, 'cluster signaling' occurs when membrane-bound IL6:IL6R complexes on transmitter cells activate IL6ST receptors on neighboring receiver cells. In terms of biological role, IL6 is a potent inducer of the acute phase response. Rapid production of IL6 contributes to host defense during infection and tissue injury, but excessive IL6 synthesis is involved in disease pathology. In the innate immune response, is synthesized by myeloid cells, such as macrophages and dendritic cells, upon recognition of pathogens through toll-like receptors (TLRs) at the site of infection or tissue injury. In the adaptive immune response, is required for the differentiation of B cells into immunoglobulin-secreting cells. Plays a major role in the differentiation of CD4(+) T cell subsets. Essential factor for the development of T follicular helper (Tfh) cells that are required for the induction of germinal-center formation. Required to drive naive CD4(+) T cells to the Th17 lineage. Also required for proliferation of myeloma cells and the survival of plasmablast cells. Acts as an essential factor in bone homeostasis and on vessels directly or indirectly by induction of VEGF, resulting in increased angiogenesis activity and vascular permeability. Induces, through 'trans-signaling' and synergistically with IL1B and TNF, the production of VEGF. Involved in metabolic controls, is discharged into the bloodstream after muscle contraction increasing lipolysis and improving insulin resistance. 'Trans-signaling' in central nervous system also regulates energy and glucose homeostasis. Mediates, through GLP-1, crosstalk between insulin-sensitive tissues, intestinal L cells and pancreatic islets to adapt to changes in insulin demand. Also acts as a myokine. Plays a protective role during liver injury, being required for maintenance of tissue regeneration. Also has a pivotal role in iron metabolism by regulating HAMP/hepcidin expression upon inflammation or bacterial infection. Through activation of IL6ST-YAP-NOTCH pathway, induces inflammation-induced epithelial regeneration. The protein is Interleukin-6 (IL6) of Orcinus orca (Killer whale).